The following is a 299-amino-acid chain: MNKGFVSGEEFARWYATARQMAIAHGIETGELNWLLQGWTDLDRLTLRLQDFAHREIALQETWENIQRGWRRRVEEKYPVQYLLGQTQWRDFVIKVTDDVLIPRPETELIIDIVQHEHSALSPSNCADHWVDLGTGSGAIALGLAATFPQALVHAVDCSGSALAIARENAQLNQFGDRIQFHQGYWWEPLEHLKGQVQGMVSNPPYIPQRELAQLQPEVIKHEPLLALDGGPDGLQAVEQLIRRSPTYLKPGGFWLVEIMTGQAPMVAELLRASGAYQDIQIHRDLASIERFVSARTLS.

S-adenosyl-L-methionine is bound by residues 134 to 138 (GTGSG), Asp-157, Trp-186, and Asn-203. 203-206 (NPPY) provides a ligand contact to substrate.

This sequence belongs to the protein N5-glutamine methyltransferase family. PrmC subfamily.

It catalyses the reaction L-glutaminyl-[peptide chain release factor] + S-adenosyl-L-methionine = N(5)-methyl-L-glutaminyl-[peptide chain release factor] + S-adenosyl-L-homocysteine + H(+). Functionally, methylates the class 1 translation termination release factors RF1/PrfA and RF2/PrfB on the glutamine residue of the universally conserved GGQ motif. The protein is Release factor glutamine methyltransferase of Synechocystis sp. (strain ATCC 27184 / PCC 6803 / Kazusa).